We begin with the raw amino-acid sequence, 420 residues long: Glyceraldehyde-3-phosphate dehydrogenase GAPCP2, chloroplastic (420 aa).

The transit peptide at 1–66 (MALSSLLRSA…YNAKRVQPIK (66 aa)) directs the protein to the chloroplast. Residues 94-95 (RI), Asp116, and Arg162 each bind NAD(+). Residues 233-235 (SCT), Thr264, 293-294 (TG), and Arg316 contribute to the D-glyceraldehyde 3-phosphate site. The Nucleophile role is filled by Cys234. Asn398 is an NAD(+) binding site.

The protein belongs to the glyceraldehyde-3-phosphate dehydrogenase family. In terms of assembly, homotetramer. As to expression, expressed in shoot and root vasculature, leaf veins and vascular tissue of flowers and siliques.

It localises to the plastid. The protein localises to the chloroplast stroma. It carries out the reaction D-glyceraldehyde 3-phosphate + phosphate + NAD(+) = (2R)-3-phospho-glyceroyl phosphate + NADH + H(+). Functionally, involved in plastidial glycolytic pathway and plays a specific role in glycolytic energy production in non-green plastids and chloroplasts. Essential for breakdown of starch to form sucrose for export to non-photosynthetic tissues, and to generate primary metabolites for anabolic pathways such as fatty acid and amino acid synthesis. Plays an important role in plant development by providing substrates for the phosphorylated pathway of serine biosynthesis in roots. Plays a crucial role in pollen development. Functionally redundant with GAPCP1. This chain is Glyceraldehyde-3-phosphate dehydrogenase GAPCP2, chloroplastic (GAPCP2), found in Arabidopsis thaliana (Mouse-ear cress).